The chain runs to 133 residues: Profilin Sal k 4.0301 (133 aa).

Cys95 and Cys117 are oxidised to a cystine.

The protein belongs to the profilin family. Occurs in many kinds of cells as a complex with monomeric actin in a 1:1 ratio. As to expression, expressed in pollen (at protein and mRNA level).

It is found in the cytoplasm. The protein resides in the cytoskeleton. In terms of biological role, binds to actin and affects the structure of the cytoskeleton. At high concentrations, profilin prevents the polymerization of actin, whereas it enhances it at low concentrations. In Kali turgidum (Prickly saltwort), this protein is Profilin Sal k 4.0301.